Here is a 167-residue protein sequence, read N- to C-terminus: Transcription factor E (167 aa).

The HTH TFE/IIEalpha-type domain occupies 5–87; it reads ENPIHRAYLL…LWKICPESLD (83 aa).

This sequence belongs to the TFE family. Monomer. Interaction with RNA polymerase subunits RpoF and RpoE is necessary for Tfe stimulatory transcription activity. Able to interact with Tbp and RNA polymerase in the absence of DNA promoter. Interacts both with the preinitiation and elongation complexes.

Its function is as follows. Transcription factor that plays a role in the activation of archaeal genes transcribed by RNA polymerase. Facilitates transcription initiation by enhancing TATA-box recognition by TATA-box-binding protein (Tbp), and transcription factor B (Tfb) and RNA polymerase recruitment. Not absolutely required for transcription in vitro, but particularly important in cases where Tbp or Tfb function is not optimal. It dynamically alters the nucleic acid-binding properties of RNA polymerases by stabilizing the initiation complex and destabilizing elongation complexes. Seems to translocate with the RNA polymerase following initiation and acts by binding to the non template strand of the transcription bubble in elongation complexes. This chain is Transcription factor E, found in Methanothrix thermoacetophila (strain DSM 6194 / JCM 14653 / NBRC 101360 / PT) (Methanosaeta thermophila).